Reading from the N-terminus, the 248-residue chain is Inhibitor of growth protein 4 (248 aa).

The stretch at 25–118 (FQLMRDLDQR…ADLKEKQIES (94 aa)) forms a coiled coil. N6-acetyllysine is present on residues Lys-112, Lys-127, and Lys-129. The interval 115-160 (QIESSDYDSSSSKGKKSRTQKEKKAARARSKGKNSDEEAPKAAQKK) is disordered. The Bipartite nuclear localization signal signature appears at 127 to 147 (KGKKSRTQKEKKAARARSKGK). A Citrulline modification is found at Arg-132. Residues Lys-145, Lys-147, and Lys-155 each carry the N6-acetyllysine modification. Arg-165 carries the post-translational modification Citrulline. The PHD-type zinc finger occupies 195–244 (PTYCLCHQVSYGEMIGCDNPDCSIERFHFACVGLTTKPRGKWFCPRCSQE). The Zn(2+) site is built by Cys-198, Cys-200, Cys-211, Cys-216, His-222, Cys-225, Cys-238, and Cys-241.

Belongs to the ING family. In terms of assembly, homodimer. Component of the HBO1 complex composed of KAT7/HBO1, MEAF6, ING4 or ING5, and one scaffold subunit: complexes containing BRPF scaffold (BRPF1, BRD1/BRPF2 or BRPF3) direct KAT7/HBO1 specificity towards H3K14ac, while complexes containing JADE scaffold (JADE1, JADE2 and JADE3) mediate acetylation of histone H4. Interacts with H3K4me3 and to a lesser extent with H3K4me2, the interaction augments KAT7/HBO1 acetylation activity on H3 tails. Interacts with EP300, RELA and TP53; these interactions may be indirect. Interacts with EGLN1. Interacts with BCL2A1. Post-translationally, citrullination by PADI4 within the nuclear localization signal disrupts the interaction with p53 and increases susceptibility to degradation.

The protein resides in the nucleus. Component of HBO1 complexes, which specifically mediate acetylation of histone H3 at 'Lys-14' (H3K14ac), and have reduced activity toward histone H4. Through chromatin acetylation it may function in DNA replication. May inhibit tumor progression by modulating the transcriptional output of signaling pathways which regulate cell proliferation. Can suppress brain tumor angiogenesis through transcriptional repression of RELA/NFKB3 target genes when complexed with RELA. May also specifically suppress loss of contact inhibition elicited by activated oncogenes such as MYC. Represses hypoxia inducible factor's (HIF) activity by interacting with HIF prolyl hydroxylase 2 (EGLN1). Can enhance apoptosis induced by serum starvation in mammary epithelial cell line HC11. This Bos taurus (Bovine) protein is Inhibitor of growth protein 4 (ING4).